The following is an 891-amino-acid chain: DNA mismatch repair protein MutS (891 aa).

An ATP-binding site is contributed by 632-639; sequence GPNMAGKS.

The protein belongs to the DNA mismatch repair MutS family.

Its function is as follows. This protein is involved in the repair of mismatches in DNA. It is possible that it carries out the mismatch recognition step. This protein has a weak ATPase activity. In Rhodopirellula baltica (strain DSM 10527 / NCIMB 13988 / SH1), this protein is DNA mismatch repair protein MutS.